Reading from the N-terminus, the 212-residue chain is Translation initiation factor IF-3 (212 aa).

Residues 168 to 212 (MAPKAPASPKKDKADRPEGDAGDTDMAAPAPAPAAAPETESAPSA) form a disordered region. The span at 176–186 (PKKDKADRPEG) shows a compositional bias: basic and acidic residues. Residues 194-212 (AAPAPAPAAAPETESAPSA) are compositionally biased toward low complexity.

Belongs to the IF-3 family. Monomer.

The protein localises to the cytoplasm. Functionally, IF-3 binds to the 30S ribosomal subunit and shifts the equilibrium between 70S ribosomes and their 50S and 30S subunits in favor of the free subunits, thus enhancing the availability of 30S subunits on which protein synthesis initiation begins. The protein is Translation initiation factor IF-3 of Deinococcus radiodurans (strain ATCC 13939 / DSM 20539 / JCM 16871 / CCUG 27074 / LMG 4051 / NBRC 15346 / NCIMB 9279 / VKM B-1422 / R1).